Here is a 673-residue protein sequence, read N- to C-terminus: Beta-galactosidase GalA (673 aa).

Substrate is bound at residue Arg105. Cys109 lines the Zn(2+) pocket. Asn143 provides a ligand contact to substrate. Glu144 (proton donor) is an active-site residue. Positions 149, 151, and 154 each coordinate Zn(2+). Catalysis depends on Glu308, which acts as the Nucleophile. Substrate is bound by residues Trp316 and 356 to 359; that span reads EKFH.

The protein belongs to the glycosyl hydrolase 42 family. As to quaternary structure, homodimer.

It carries out the reaction Hydrolysis of terminal non-reducing beta-D-galactose residues in beta-D-galactosides.. Inhibited by hydrolysis end products D-galactose and D-glucose. The hydrolysis of o-nitrophenyl-beta-D-galactopyranoside (ONPG) is slightly activated by monovalent ions, Na(+) and K(+). Concentrations of these ions in the range of 1-100 mM exert the stimulating effects. The presence of 1 mM Mn(2+) together with the presence of 10 mM Na(+) slightly stimulates the activity, while presence of 10 mM Mn(2+) inhibits the activity by about 40%. Catalyzes the hydrolysis of lactose to its constituent monosaccharides glucose and galactose. Possesses a low level of transgalactosylation activity for the production of galacto-oligosaccharides (GOS) from lactose. The sequence is that of Beta-galactosidase GalA from Bacillus licheniformis (strain ATCC 14580 / DSM 13 / JCM 2505 / CCUG 7422 / NBRC 12200 / NCIMB 9375 / NCTC 10341 / NRRL NRS-1264 / Gibson 46).